The chain runs to 286 residues: MLRRKLGLYLALIRWNRPAGWLLLLWPTLSALWVASHGFPGWHLLTVFTLGTILMRSAGCCVNDVADRDFDRHVKRTAQRPVTSGQVSVREALVLGAVLALLAFGLVLTTNAATIAWSFAALAVTLAYPFAKRYVSMPQAVLGVAFSFGIPMAFAAVQSRVPLLAWVLLLGNLCWVIAYDTEYAMVDRDDDLKIGMKTSAITLGRFDVAGVMLSYLVYLSVWALALADIPQAAIYWMAIGLAGLQALWHGWLIRKRERDDCFKAFRLNHWLGFTVFAGIALSYLAA.

The next 9 helical transmembrane spans lie at 19 to 39, 42 to 62, 92 to 112, 115 to 135, 137 to 157, 161 to 181, 206 to 226, 233 to 253, and 264 to 284; these read AGWL…SHGF, WHLL…GCCV, ALVL…TTNA, IAWS…KRYV, MPQA…FAAV, VPLL…AYDT, FDVA…ALAL, AIYW…GWLI, and AFRL…LSYL.

Belongs to the UbiA prenyltransferase family. It depends on Mg(2+) as a cofactor.

The protein resides in the cell inner membrane. It catalyses the reaction all-trans-octaprenyl diphosphate + 4-hydroxybenzoate = 4-hydroxy-3-(all-trans-octaprenyl)benzoate + diphosphate. The protein operates within cofactor biosynthesis; ubiquinone biosynthesis. Functionally, catalyzes the prenylation of para-hydroxybenzoate (PHB) with an all-trans polyprenyl group. Mediates the second step in the final reaction sequence of ubiquinone-8 (UQ-8) biosynthesis, which is the condensation of the polyisoprenoid side chain with PHB, generating the first membrane-bound Q intermediate 3-octaprenyl-4-hydroxybenzoate. In Polaromonas sp. (strain JS666 / ATCC BAA-500), this protein is 4-hydroxybenzoate octaprenyltransferase.